Reading from the N-terminus, the 235-residue chain is Fibrillarin-like rRNA/tRNA 2'-O-methyltransferase (235 aa).

S-adenosyl-L-methionine-binding positions include 91-92, 110-111, 137-138, and 157-160; these read TT, EF, DA, and DVAQ.

The protein belongs to the methyltransferase superfamily. Fibrillarin family. As to quaternary structure, interacts with nop5. Component of box C/D small ribonucleoprotein (sRNP) particles that contain rpl7ae, FlpA and nop5, plus a guide RNA.

Functionally, involved in pre-rRNA and tRNA processing. Utilizes the methyl donor S-adenosyl-L-methionine to catalyze the site-specific 2'-hydroxyl methylation of ribose moieties in rRNA and tRNA. Site specificity is provided by a guide RNA that base pairs with the substrate. Methylation occurs at a characteristic distance from the sequence involved in base pairing with the guide RNA. The protein is Fibrillarin-like rRNA/tRNA 2'-O-methyltransferase of Pyrobaculum islandicum (strain DSM 4184 / JCM 9189 / GEO3).